The chain runs to 201 residues: Recombination protein RecR (201 aa).

The C4-type zinc finger occupies 60–75; the sequence is CRRCGNVDVCDPCTIC. The region spanning 83 to 178 is the Toprim domain; the sequence is RTLVVVADVG…RVTRLAQGVP (96 aa).

It belongs to the RecR family.

Its function is as follows. May play a role in DNA repair. It seems to be involved in an RecBC-independent recombinational process of DNA repair. It may act with RecF and RecO. The protein is Recombination protein RecR of Xanthobacter autotrophicus (strain ATCC BAA-1158 / Py2).